The following is a 282-amino-acid chain: Bifunctional protein FolD (282 aa).

NADP(+) contacts are provided by residues 165–167 and I231; that span reads GAS.

This sequence belongs to the tetrahydrofolate dehydrogenase/cyclohydrolase family. Homodimer.

It catalyses the reaction (6R)-5,10-methylene-5,6,7,8-tetrahydrofolate + NADP(+) = (6R)-5,10-methenyltetrahydrofolate + NADPH. The catalysed reaction is (6R)-5,10-methenyltetrahydrofolate + H2O = (6R)-10-formyltetrahydrofolate + H(+). The protein operates within one-carbon metabolism; tetrahydrofolate interconversion. Its function is as follows. Catalyzes the oxidation of 5,10-methylenetetrahydrofolate to 5,10-methenyltetrahydrofolate and then the hydrolysis of 5,10-methenyltetrahydrofolate to 10-formyltetrahydrofolate. The polypeptide is Bifunctional protein FolD (Francisella tularensis subsp. mediasiatica (strain FSC147)).